A 768-amino-acid chain; its full sequence is MSNLGKSTGSRKDTKMRIRAFPMTMDEKYVNSIWDLLKNAIQEIQRKNNSGLSFEELYRNAYTMVLHKHGEKLYTGLREVVTEHLINKVREDVLNSLNNNFLQTLNQAWNDHQTAMVMIRDILMYMDRVYVQQNNVENVYNLGLIIFRDQVVRYGCIRDHLRQTLLDMIARERKGEVVDRGAIRNACQMLMILGLEGRSVYEEDFEAPFLEMSAEFFQMESQKFLAENSASVYIKKVEARINEEIERVMHCLDKSTEEPIVKVVERELISKHMKTIVEMENSGLVHMLKNGKTEDLACMYKLFSRVPNGLKTMCECMSLYLREQGKALVSEEGEGKNPVDYIQGLLDLKSRFDRFLQESFSNDRLFKQTIAGDFEYFLNLNSRSPEYLSLFIDDKLKKGVKGLTEQEVESILDKAMVLFRFMQEKDVFERYYKQHLARRLLTNKSVSDDSEKNMISKLKTECGCQFTSKLEGMFRDMSISNTTMDEFRQHLQTTGVSLGGVDLTVRVLTTGYWPTQSATPKCNIPPSPRHAFEIFRRFYLAKHSGRQLTLQHHMGSADLNATFYGAVKKEDGSEVGVGGAQVTGSNTRKHILQVSTFQMTILMLFNNREKYTFEEIQQETDIPERELVRALQSLACGKPTQRVLTKEPKSKEIESGHMFTVNDQFTSKLHRVKIQTVAAKQGESDPERKETRQKVDDDRKHEIEAAIVRIMKSRKKMQHNVLVAEVTQQLKARFLPSPVVIKKRIEGLIEREYLARTPEDRKVYTYVA.

A disordered region spans residues 677 to 698 (VAAKQGESDPERKETRQKVDDD). A compositionally biased stretch (basic and acidic residues) spans 682 to 698 (GESDPERKETRQKVDDD). Residues 698 to 760 (DRKHEIEAAI…REYLARTPED (63 aa)) form the Cullin neddylation domain. Lysine 712 participates in a covalent cross-link: Glycyl lysine isopeptide (Lys-Gly) (interchain with G-Cter in NEDD8).

Belongs to the cullin family. Component of multiple BCR (BTB-CUL3-RBX1) E3 ubiquitin-protein ligase complexes formed of cul3, rbx1 and a variable BTB domain-containing protein acting as both, adapter to cullin and substrate recognition subunit. Interacts with btbd6. Neddylated. Attachment of NEDD8 is required for the E3 ubiquitin-protein ligase activity of the SCF-like complex.

The protein localises to the nucleus. Its pathway is protein modification; protein ubiquitination. Its function is as follows. Probable core component of cullin-based SCF-like E3 ubiquitin-protein ligase complexes which mediate the ubiquitination and subsequent proteasomal degradation of target proteins. The E3 ubiquitin-protein ligase activity of the complex is dependent on the neddylation of the cullin subunit. Involved in ER-Golgi transport by regulating the size of COPII coats, thereby playing a key role in collagen export, which is required for embryonic stem (ES) cells division. May play a role in the regulation of mittotic entry via ubiquitination of aurka. This Xenopus laevis (African clawed frog) protein is Cullin-3-B (cul3b).